A 59-amino-acid polypeptide reads, in one-letter code: Putative potassium channel toxin Ts23 (59 aa).

Positions 1 to 22 (MKAFYGILIIFILISMLDLSQQ) are cleaved as a signal peptide. Cystine bridges form between cysteine 29–cysteine 50, cysteine 35–cysteine 55, and cysteine 39–cysteine 57.

The protein belongs to the short scorpion toxin superfamily. Potassium channel inhibitor family. Alpha-KTx 04 subfamily. In terms of tissue distribution, expressed by the venom gland.

Its subcellular location is the secreted. Potently blocks Kv1.1/KCNA1 (85%), Kv1.2/KCNA2 (91%), Kv1.3/KCNA3 (89%), Kv1.6/KCNA6 (94%), and Shaker (97%). The sequence is that of Putative potassium channel toxin Ts23 from Tityus serrulatus (Brazilian scorpion).